Consider the following 257-residue polypeptide: MEACVSSLLVLALGALSVGSSFGTQIIGGREVIPHSRPYMASLQRNGSHLCGGVLVHPKWVLTAAHCLAQRMAQLRLVLGLHTLDSPGLTFHIKAAIQHPRYKPVPALENDLALLQLDGKVKPSRTIRPLALPSKRQVVAAGTRCSMAGWGLTHQGGRLSRVLRELDLQVLDTRMCNNSRFWNGSLSPSMVCLAADSKDQAPCKGDSGGPLVCGKGRVLARVLSFSSRVCTDIFKPPVATAVAPYVSWIRKVTGRSA.

Positions 1 to 23 (MEACVSSLLVLALGALSVGSSFG) are cleaved as a signal peptide. The propeptide at 24–25 (TQ) is activation peptide. Residues 26 to 254 (IIGGREVIPH…YVSWIRKVTG (229 aa)) enclose the Peptidase S1 domain. Cysteines 51 and 67 form a disulfide. Residues H66 and D111 each act as charge relay system in the active site. Cystine bridges form between C145/C213, C176/C192, and C203/C230. N-linked (GlcNAc...) asparagine glycosylation occurs at N177. S207 serves as the catalytic Charge relay system.

This sequence belongs to the peptidase S1 family. Granzyme subfamily. In terms of tissue distribution, highly and constitutively expressed in activated natural killer (NK) cells.

Its subcellular location is the secreted. The protein localises to the cytoplasmic granule. Cleaves peptide substrates after methionine, leucine, and norleucine. Physiological substrates include EZR, alpha-tubulins and the apoptosis inhibitor BIRC5/Survivin. Promotes caspase activation and subsequent apoptosis of target cells. The sequence is that of Granzyme M (GZMM) from Homo sapiens (Human).